The primary structure comprises 562 residues: Zinc finger protein 579 (562 aa).

Over residues 1-11 (MDPQPPPPAQG) the composition is skewed to pro residues. The segment at 1–45 (MDPQPPPPAQGSPPHRDRGRGRGRGRGRGRGRGRGRGGAGAPRAP) is disordered. Residues 17-35 (DRGRGRGRGRGRGRGRGRG) show a composition bias toward basic residues. 3 C2H2-type zinc fingers span residues 46 to 68 (LPCP…RLSH), 74 to 96 (HACP…LRGH), and 102 to 125 (LRCA…AQEH). At R94 the chain carries Omega-N-methylarginine. Disordered regions lie at residues 120 to 154 (HLAQ…EGVE) and 166 to 199 (EEAT…AEAG). Residues 187–197 (DPRESEAKEAE) show a composition bias toward basic and acidic residues. S191 is modified (phosphoserine). 2 consecutive C2H2-type zinc fingers follow at residues 267-289 (HQCS…RLVH) and 295-317 (FVCP…RRVH). The segment at 321-377 (SLLAPLPGAGKKDDKASGGRNSGKGPEGGEGAECGGASEGGEGGHNGGDATPARPPA) is disordered. Over residues 340–367 (RNSGKGPEGGEGAECGGASEGGEGGHNG) the composition is skewed to gly residues. 3 consecutive C2H2-type zinc fingers follow at residues 382 to 404 (FWCP…GVTH), 410 to 432 (FQCV…AQVH), and 439 to 461 (HPCP…QRCH). S486 bears the Phosphoserine mark. Residues 505-530 (AHIKEEPPSPGTPPQSPPAPPVFLSA) are disordered. Residues 512–525 (PSPGTPPQSPPAPP) are compositionally biased toward pro residues.

This sequence belongs to the krueppel C2H2-type zinc-finger protein family.

It is found in the nucleus. May be involved in transcriptional regulation. The chain is Zinc finger protein 579 (Znf579) from Mus musculus (Mouse).